The sequence spans 501 residues: ATP synthase subunit alpha (501 aa).

An ATP-binding site is contributed by 169–176; the sequence is GDRQTGKT.

The protein belongs to the ATPase alpha/beta chains family. F-type ATPases have 2 components, CF(1) - the catalytic core - and CF(0) - the membrane proton channel. CF(1) has five subunits: alpha(3), beta(3), gamma(1), delta(1), epsilon(1). CF(0) has three main subunits: a(1), b(2) and c(9-12). The alpha and beta chains form an alternating ring which encloses part of the gamma chain. CF(1) is attached to CF(0) by a central stalk formed by the gamma and epsilon chains, while a peripheral stalk is formed by the delta and b chains.

The protein resides in the cell membrane. It catalyses the reaction ATP + H2O + 4 H(+)(in) = ADP + phosphate + 5 H(+)(out). Produces ATP from ADP in the presence of a proton gradient across the membrane. The alpha chain is a regulatory subunit. The sequence is that of ATP synthase subunit alpha from Streptococcus pneumoniae serotype 4 (strain ATCC BAA-334 / TIGR4).